The primary structure comprises 279 residues: MVIKAKSPAGFAEKYIIESIWNGRFPPGSILPAERELSELIGVTRTTLREVLQRLARDGWLTIQHGKPTKVNQFMETSGLHILDTLMTLDVDNATNIVEDLLAARTNISPIFMRYAFKVNKENSERTIKTVIDSCEQLVAAESWDAFLSSSPYADKIQQNVKEDNEKDEAKRQEILIAKTFNFYDYMLFQRLAFHSGNQIYGLIFNGLKKLYDRVGSFYFSNPASRELALKFYRQLLLTCESGQREQLPALIRQYGIESAMIWNEMKKQLPTNFTEDDC.

The HTH gntR-type domain maps to 6-74 (KSPAGFAEKY…HGKPTKVNQF (69 aa)). Positions 34-53 (ERELSELIGVTRTTLREVLQ) form a DNA-binding region, H-T-H motif.

In terms of assembly, homodimer.

The protein localises to the cytoplasm. Its function is as follows. Multifunctional regulator of fatty acid metabolism. This is Fatty acid metabolism regulator protein from Vibrio vulnificus (strain CMCP6).